Consider the following 230-residue polypeptide: Probable dual specificity protein phosphatase DDB_G0283417 (230 aa).

Positions 78 to 230 (NNNYESINLY…LEIFEKELLF (153 aa)) constitute a Tyrosine-protein phosphatase domain. Cysteine 174 serves as the catalytic Phosphocysteine intermediate.

This sequence belongs to the protein-tyrosine phosphatase family. Non-receptor class dual specificity subfamily.

The catalysed reaction is O-phospho-L-tyrosyl-[protein] + H2O = L-tyrosyl-[protein] + phosphate. It catalyses the reaction O-phospho-L-seryl-[protein] + H2O = L-seryl-[protein] + phosphate. The enzyme catalyses O-phospho-L-threonyl-[protein] + H2O = L-threonyl-[protein] + phosphate. Its function is as follows. Has a dual specificity toward Ser/Thr and Tyr-containing proteins. This is Probable dual specificity protein phosphatase DDB_G0283417 from Dictyostelium discoideum (Social amoeba).